A 323-amino-acid chain; its full sequence is Fructokinase-1 (323 aa).

This sequence belongs to the carbohydrate kinase PfkB family. Expressed in root, endosperm and leaf tissues.

It catalyses the reaction D-fructose + ATP = D-fructose 6-phosphate + ADP + H(+). It participates in glycan biosynthesis; starch biosynthesis. With respect to regulation, completely inhibited at 50 mM ATP, but not inhibited at high fructose concentration. Its function is as follows. Fructokinase that may play an important role in maintaining the flux of carbon towards starch formation. May also be involved in a sugar-sensing pathway. The polypeptide is Fructokinase-1 (Oryza sativa subsp. japonica (Rice)).